A 1044-amino-acid chain; its full sequence is MGVALTRSAQWTAAGHGAKTLEVTPLNEAIVKEIIMFVESFIYKYPQEANYVFVEPLEWKTNLDPSAFGSGYAVSGTTVKSEEADKNGEPLLYLSVPQIKIRSFGQLSRMLYIAKNMKLKEAQACIEANRNPVAKILGLDYNIISEKIGNSFVSNILDKITKDDDSESEIKMKIALQLKQLDLHLLNHSLKHISLEIRLNPGTVKNDIELLKQFSGKGKQTVLESIEYTSDYEFSNGCRAPPWRQIKGEICYVLVKPHDAETLCVTCSKEGVFLNGGKTDDEGQINYERKGEIYKDLVTLLKEKSAIFSENMSKQEIKFSEQPQKDQPNEAPKEEVAITHKASVTSRKSTQEKNRINLGRSQLTKRLEPSLNWRTSVSSKDRNTLRDTQVEKHGGKLEKSRSSVSPGRAQLIRKSVEKIEEIISDSSSESEEDEEQPDHRQEANADLPSEYWQIQKLVKYLKGGNQTATVIALCSMKDFNLAQETCQLAIRDVGGLEVLINLLETDEVKCKIGSLKILKEISHNPQIRRNIVDLGGLPVMVNILDSPHKSLKCLAAETIANVAKFRRARRVVRRHGGITKLVALLDCGKHSGEPAQSSLYETRDVEVARCGALALWSCSKSYANKEAIRKAGGIPLLARLLKTSHENMLIPVVGTLQECASEENYRAAIKAERIIENLVKNLNSENEQLQEHCAMAIYQCAEDEETRDLVRLHGGLKPLASLLNNTDNKERLAAVTGAIWKCSISKENVTKFREYKAIETLVGLLTDQPEEVLVNVVGALGECCQEHENRVIIRRCGGIQPLVNLLVGINQALLVNVTKAVGACAVEPESMMIIDRLDGVRLLWSLLKNPHPDVKASAAWALCPCIQNAKDAGEMVRSFVGGLELVVNLLKSDNKEVLASVCAVITNIAKDQENLAVITDHGVVPLLSKLANTNNDKLRRHLAETISRCCMWGRNRVAFGEHKAVAPLVRYLKSNDTNVHRATAQALYQLSEDADNCVTMHENGAVKLLLDMVGSPDEELQEAAAGCISNIRRLALAIEKARYS.

2 stretches are compositionally biased toward basic and acidic residues: residues 317–338 (IKFS…EVAI) and 379–401 (SKDR…EKSR). Disordered regions lie at residues 317 to 409 (IKFS…PGRA) and 423 to 446 (ISDS…ANAD). HEAT repeat units lie at residues 448–485 (PSEY…AQET), 487–527 (QLAI…NPQI), 530–568 (NIVD…FRRA), 627–665 (AIRK…EENY), and 668–706 (AIKA…DEET). 11 ARM repeats span residues 484 to 523 (ETCQ…EISH), 525 to 564 (PQIR…NVAK), 535 to 577 (GGLP…RHGG), 622 to 661 (YANK…ECAS), 663 to 702 (ENYR…QCAE), 746 to 785 (KENV…ECCQ), 828 to 867 (PESM…PCIQ), 871 to 910 (DAGE…NIAK), 912 to 951 (QENL…RCCM), 953 to 992 (GRNR…QLSE), and 1004 to 1031 (GAVK…ISNI). HEAT repeat units lie at residues 831 to 870 (MMII…QNAK), 874 to 914 (EMVR…DQEN), 916 to 955 (AVIT…WGRN), 958 to 996 (AFGE…DADN), and 999 to 1037 (TMHE…LALA).

Component of the outer dynein arm-docking complex along with ODAD1, ODAD3, ODAD4 and CLXN. Interacts with CFAP61. As to expression, expressed in trachea multiciliated cells.

Its subcellular location is the cytoplasm. It localises to the cytoskeleton. The protein resides in the cilium axoneme. The protein localises to the cilium basal body. Component of the outer dynein arm-docking complex (ODA-DC) that mediates outer dynein arms (ODA) binding onto the doublet microtubule. Involved in mediating assembly of both ODAs and their axonemal docking complex onto ciliary microtubules. The chain is Outer dynein arm-docking complex subunit 2 (ODAD2) from Bos taurus (Bovine).